The following is a 374-amino-acid chain: Organelle RRM domain-containing protein 1, chloroplastic (374 aa).

A chloroplast-targeting transit peptide spans 1 to 54 (MEALIASTSFFVPISNSSSSHIINNRFFPSFYSPNLNFGTFRKTSLSSSHLVFS). Basic and acidic residues predominate over residues 258–271 (KDYEGDSTQDSRDQ). Positions 258–279 (KDYEGDSTQDSRDQDDSESPPV) are disordered. Residues 282–360 (KKLFITGLSF…WMIVVDVAKT (79 aa)) form the RRM domain.

As to quaternary structure, interacts with PCMP-H51/CRR28 and PCMP-H12/OTP82. Interacts with MORF8/RIP1, MORF2/RIP2 and VAR3/OZ1.

It is found in the plastid. The protein resides in the chloroplast. Involved in C-to-U editing of chloroplastic RNA. Functions as major chloroplastic editing factor. Controls 62 percent of the chloroplastic editing sites. Binds RNA close to ORRM1-dependent editing sites in vitro. Binds the editing recognition trans-factors PCMP-H51/CRR28 and PCMP-H12/OTP82. This is Organelle RRM domain-containing protein 1, chloroplastic from Arabidopsis thaliana (Mouse-ear cress).